Consider the following 182-residue polypeptide: UPF0149 protein CGSHiGG_07585 (182 aa).

This sequence belongs to the UPF0149 family.

This is UPF0149 protein CGSHiGG_07585 from Haemophilus influenzae (strain PittGG).